The chain runs to 554 residues: Glucose-6-phosphate isomerase (554 aa).

Glutamate 359 serves as the catalytic Proton donor. Active-site residues include histidine 390 and lysine 518.

It belongs to the GPI family.

Its subcellular location is the cytoplasm. It carries out the reaction alpha-D-glucose 6-phosphate = beta-D-fructose 6-phosphate. Its pathway is carbohydrate biosynthesis; gluconeogenesis. It functions in the pathway carbohydrate degradation; glycolysis; D-glyceraldehyde 3-phosphate and glycerone phosphate from D-glucose: step 2/4. In terms of biological role, catalyzes the reversible isomerization of glucose-6-phosphate to fructose-6-phosphate. The chain is Glucose-6-phosphate isomerase from Pseudomonas fluorescens (strain Pf0-1).